A 617-amino-acid polypeptide reads, in one-letter code: Chaperone protein HscA homolog (617 aa).

Residues 1–23 (MALLQIAEPGQSSAPHEHKRAAG) are disordered.

It belongs to the heat shock protein 70 family.

Its function is as follows. Chaperone involved in the maturation of iron-sulfur cluster-containing proteins. Has a low intrinsic ATPase activity which is markedly stimulated by HscB. In Vibrio vulnificus (strain YJ016), this protein is Chaperone protein HscA homolog.